Consider the following 140-residue polypeptide: Ribosome-binding factor A (140 aa).

Belongs to the RbfA family. Monomer. Binds 30S ribosomal subunits, but not 50S ribosomal subunits or 70S ribosomes.

Its subcellular location is the cytoplasm. Its function is as follows. One of several proteins that assist in the late maturation steps of the functional core of the 30S ribosomal subunit. Associates with free 30S ribosomal subunits (but not with 30S subunits that are part of 70S ribosomes or polysomes). Required for efficient processing of 16S rRNA. May interact with the 5'-terminal helix region of 16S rRNA. This Cereibacter sphaeroides (strain ATCC 17023 / DSM 158 / JCM 6121 / CCUG 31486 / LMG 2827 / NBRC 12203 / NCIMB 8253 / ATH 2.4.1.) (Rhodobacter sphaeroides) protein is Ribosome-binding factor A.